The following is a 729-amino-acid chain: Catalase-peroxidase (729 aa).

A cross-link (tryptophyl-tyrosyl-methioninium (Trp-Tyr) (with M-243)) is located at residues 95-217; it reads WHSAGTYRIT…LAAVQMGLIY (123 aa). His96 (proton acceptor) is an active-site residue. A cross-link (tryptophyl-tyrosyl-methioninium (Tyr-Met) (with W-95)) is located at residues 217–243; sequence YVNPEGPNGKPDPIAAATDIRETFFRM. His258 is a binding site for heme b.

Belongs to the peroxidase family. Peroxidase/catalase subfamily. In terms of assembly, homodimer or homotetramer. Heme b is required as a cofactor. In terms of processing, formation of the three residue Trp-Tyr-Met cross-link is important for the catalase, but not the peroxidase activity of the enzyme.

It catalyses the reaction H2O2 + AH2 = A + 2 H2O. The catalysed reaction is 2 H2O2 = O2 + 2 H2O. Bifunctional enzyme with both catalase and broad-spectrum peroxidase activity. The protein is Catalase-peroxidase of Nitrobacter hamburgensis (strain DSM 10229 / NCIMB 13809 / X14).